The chain runs to 167 residues: MVNNRVTESTTTAVSSNGGPPKACAGCGGKIADRFLLYSMERYWHTRCLKCSCCQAQLGEIGTSCYTKSGMILCRNDYIRLFGSSGACSACGQSIPASEMVMRAQGSVYHLKCFTCATCRNRLVPGDRFHYVNGAIFCEHDRPTGLLSGHLNPLQSNPPMLPDQKVC.

The segment covering 1–17 (MVNNRVTESTTTAVSSN) has biased composition (polar residues). Residues 1-20 (MVNNRVTESTTTAVSSNGGP) are disordered. LIM zinc-binding domains follow at residues 22 to 84 (KACA…LFGS) and 86 to 148 (GACS…GLLS).

In terms of biological role, acts as a positive cofactor of GATA transcription factors to establish the identity of the ventral mesoderm during gastrulation. Down-regulation in the dorsal mesoderm is necessary for the proper formation of this territory since, when present, lmo4 may bind ldb1 and restrict the availability of this cofactor for Spemman organizer transcription factors. At neurula stages, suppresses primary neuron differentiation and modulates gene expression at the Isthmic Organizer of the midbrain-hindbrain boundary. This Xenopus tropicalis (Western clawed frog) protein is LIM domain transcription factor LMO4.1 (lmo4.1).